The sequence spans 70 residues: U2-agatoxin-Ao1l (70 aa).

Positions M1 to A20 are cleaved as a signal peptide. Positions V21–R34 are excised as a propeptide. 3 disulfides stabilise this stretch: C37/C53, C44/C58, and C52/C68. Leucine amide is present on L69.

Belongs to the neurotoxin 01 (U2-agtx) family. As to expression, expressed by the venom gland.

The protein resides in the secreted. Functionally, insect active toxin causing rapid but reversible paralysis in crickets. No activity shown in mammals. Does not show effect on mammalian voltage-gated calcium channels. This Agelena orientalis (Funnel-web spider) protein is U2-agatoxin-Ao1l.